The chain runs to 176 residues: Warthog protein 5 (176 aa).

An N-terminal signal peptide occupies residues 1-21 (MCSMWLMASWLMAFVAGSTLA). Asn70 carries an N-linked (GlcNAc...) asparagine glycan.

In terms of tissue distribution, expressed in seam cells, excretory cell, reproductive system, pharynx, pharyngeal-intestinal valve cells, neurons and neuronal support cells.

The protein localises to the secreted. Functionally, intercellular signal essential for a variety of patterning events during development. The protein is Warthog protein 5 (wrt-5) of Caenorhabditis elegans.